A 269-amino-acid polypeptide reads, in one-letter code: MSISEKVTLGQYVPADSPVHSLDPRTKILSTLVLLFALFGVRDPRFFLGWGVLLAFIVFLSRVSLRTVLRSVRPVLWLLVFTVLLHALFTPGEAILRFHFIKVSREGLHMAALMGVRLVLLVAFAGLLTLTTSPMELADGMESLMSPLARVRFPAHEMAMMMTIALRFIPTLLEETDRILKAQISRGADLEGGGVVKRLRAFVPVLVPLFLIVFQRAEDLALAMESRCYVGGVGRTRMRPLRWCLEDWVALGLMSVSVAGLLFLERAVG.

The next 6 helical transmembrane spans lie at arginine 45–leucine 65, valine 75–isoleucine 95, methionine 110–leucine 130, phenylalanine 153–leucine 173, phenylalanine 202–leucine 222, and cysteine 244–leucine 264.

This sequence belongs to the energy-coupling factor EcfT family. Forms a stable energy-coupling factor (ECF) transporter complex composed of 2 membrane-embedded substrate-binding proteins (S component), 2 ATP-binding proteins (A component) and 2 transmembrane proteins (T component). May be able to interact with more than 1 S component at a time.

It localises to the cell membrane. Functionally, transmembrane (T) component of an energy-coupling factor (ECF) ABC-transporter complex. Unlike classic ABC transporters this ECF transporter provides the energy necessary to transport a number of different substrates. The chain is Energy-coupling factor transporter transmembrane protein EcfT from Thermanaerovibrio acidaminovorans (strain ATCC 49978 / DSM 6589 / Su883) (Selenomonas acidaminovorans).